Reading from the N-terminus, the 134-residue chain is Small ribosomal subunit protein uS8c (134 aa).

The protein belongs to the universal ribosomal protein uS8 family. As to quaternary structure, part of the 30S ribosomal subunit.

The protein localises to the plastid. It localises to the chloroplast. One of the primary rRNA binding proteins, it binds directly to 16S rRNA central domain where it helps coordinate assembly of the platform of the 30S subunit. The protein is Small ribosomal subunit protein uS8c (rps8) of Eucalyptus globulus subsp. globulus (Tasmanian blue gum).